The chain runs to 274 residues: Thiamine kinase (274 aa).

This sequence belongs to the thiamine kinase family.

It catalyses the reaction thiamine + ATP = thiamine phosphate + ADP + H(+). Its pathway is cofactor biosynthesis; thiamine diphosphate biosynthesis; thiamine phosphate from thiamine: step 1/1. In terms of biological role, catalyzes the ATP-dependent phosphorylation of thiamine to thiamine phosphate. Is involved in thiamine salvage. In Escherichia coli O17:K52:H18 (strain UMN026 / ExPEC), this protein is Thiamine kinase.